The sequence spans 193 residues: Cysteine and glycine-rich protein 2 (193 aa).

In terms of domain architecture, LIM zinc-binding 1 spans 10-61 (CGACGRTVYHAEEVQCDGRSFHRCCFLCMVCRKNLDSTTVAIHDEEIYCKSC). The Nuclear localization signal signature appears at 64–69 (KKYGPK). A Glycyl lysine isopeptide (Lys-Gly) (interchain with G-Cter in SUMO2) cross-link involves residue K91. N6-acetyllysine occurs at positions 112 and 131. The LIM zinc-binding 2 domain maps to 119–170 (CSRCGDSVYAAEKIIGAGKPWHKNCFRCAKCGKSLESTTLTEKEGEIYCKGC). Residue K137 is modified to N6-acetyllysine; alternate. At K137 the chain carries N6-succinyllysine; alternate. K161 bears the N6-acetyllysine mark.

As to quaternary structure, interacts with KAT14. The LIM domain 1 is necessary and sufficient for this interaction. Interacts with GLRX3.

Its subcellular location is the nucleus. In terms of biological role, drastically down-regulated in response to PDGF-BB or cell injury, that promote smooth muscle cell proliferation and dedifferentiation. Seems to play a role in the development of the embryonic vascular system. This Mus musculus (Mouse) protein is Cysteine and glycine-rich protein 2 (Csrp2).